We begin with the raw amino-acid sequence, 186 residues long: Adenylyl-sulfate kinase (186 aa).

Residue Gly17 to Thr24 participates in ATP binding. The active-site Phosphoserine intermediate is Ser91.

This sequence belongs to the APS kinase family.

The enzyme catalyses adenosine 5'-phosphosulfate + ATP = 3'-phosphoadenylyl sulfate + ADP + H(+). It functions in the pathway sulfur metabolism; hydrogen sulfide biosynthesis; sulfite from sulfate: step 2/3. In terms of biological role, catalyzes the synthesis of activated sulfate. The chain is Adenylyl-sulfate kinase from Chloroflexus aurantiacus (strain ATCC 29364 / DSM 637 / Y-400-fl).